A 468-amino-acid polypeptide reads, in one-letter code: BTB/POZ domain-containing protein 17 (468 aa).

A signal peptide spans 1–16; the sequence is MRRFCVVPLLLVLVEA. Residues 51-120 form the BTB domain; that stretch reads TDTILRIRTA…FYCGEISVNL (70 aa). The region spanning 159-259 is the BACK domain; the sequence is VVSWYHYALR…ISPSQLFQIQ (101 aa).

The protein resides in the secreted. The protein is BTB/POZ domain-containing protein 17 (btbd17) of Xenopus tropicalis (Western clawed frog).